The chain runs to 101 residues: MAKKSKIAKNEQRKVIVERYAAKRAELKKTLVDENASPEAREEARLGLQKLPRDASPIRVRNRDQIDGRPRGTFQRFGISRVRFRDMAHRGELPGIYKSSW.

This sequence belongs to the universal ribosomal protein uS14 family. In terms of assembly, part of the 30S ribosomal subunit. Contacts proteins S3 and S10.

Functionally, binds 16S rRNA, required for the assembly of 30S particles and may also be responsible for determining the conformation of the 16S rRNA at the A site. This chain is Small ribosomal subunit protein uS14, found in Kocuria rhizophila (strain ATCC 9341 / DSM 348 / NBRC 103217 / DC2201).